We begin with the raw amino-acid sequence, 729 residues long: MSKMRFFALQELSNRKPLEITTPSNKLSDYYASHVFDRKKMQEYLPKEAYKAVVDATEKGTPISREMADLIANGMKSWAKSLNVTHYTHWFQPLTDGTAEKHDGFIEFGEDGEVIERFSGKLLIQQEPDASSFPNGGIRNTFEARGYTAWDVSSPAFVVDTTLCIPTIFISYTGEALDYKTPLLKALAAVDKAATEVCQLFDKNITRVFTNLGWEQEYFLVDTSLYNARPDLRLTGRTLMGHSSAKDQQLEDHYFGSIPPRVTAFMKELEIECHKLGIPVKTRHNEVAPNQFELAPIFENCNLANDHNQLVMDLMKRIARKHHFAVLFHEKPYNGVNGSGKHNNWSLCTDTGINLFAPGKNPKGNMLFLTFLVNVLMMVHKNQDLLRASIMSAGNSHRLGANEAPPAILSIFLGSQLSATLDEIVRQVTNSKMTPEEKTTLKLGIGRIPEILLDTTDRNRTSPFAFTGNRFEFRAAGSSANCAAAMIAINAAMANQLNEFKASVDKLMEEGIGKDEAIFRILKENIIASEPIRFEGDGYSEEWKQEAARRGLTNICHVPEALMHYTDNQSRAVLIGERIFNETELACRLEVELEKYTMKVQIESRVLGDLAINHIVPIAVSYQNRLLENLCRMKEIFSEEEYEVMSADRKELIKEISHRVSAIKVLVRDMTEARKVANHKENFKEKAFAYEETVRPYLESIRDHIDHLEMEIDDEIWPLPKYRELLFTK.

The GS beta-grasp domain maps to 85–174 (THYTHWFQPL…IPTIFISYTG (90 aa)). One can recognise a GS catalytic domain in the interval 179-615 (YKTPLLKALA…VLGDLAINHI (437 aa)). 4 residues coordinate Mg(2+): Glu-215, Glu-217, Glu-286, and Glu-293. L-glutamate-binding positions include 337 to 338 (NG) and Gly-338. Mg(2+) is bound at residue His-342. Positions 346 and 458 each coordinate ATP. Residue Arg-458 coordinates L-glutamate.

The protein belongs to the glutamine synthetase family. In terms of assembly, homohexamer. The cofactor is Mg(2+).

Its subcellular location is the cytoplasm. The catalysed reaction is L-glutamate + NH4(+) + ATP = L-glutamine + ADP + phosphate + H(+). Inhibited by L-histidine (46%), L-arginine (38%) and L-methionine-DL-sulphoximine. The activity of this enzyme is not controlled by adenylation. In terms of biological role, catalyzes the ATP-dependent biosynthesis of glutamine from glutamate and ammonia. This is Glutamine synthetase from Bacteroides fragilis (strain YCH46).